Here is a 98-residue protein sequence, read N- to C-terminus: Small ribosomal subunit protein eS24 (98 aa).

A disordered region spans residues 76 to 98 (GRQRTERSYLLNRGEPKKEEEEA). The span at 89-98 (GEPKKEEEEA) shows a compositional bias: basic and acidic residues.

The protein belongs to the eukaryotic ribosomal protein eS24 family.

This chain is Small ribosomal subunit protein eS24, found in Methanosphaerula palustris (strain ATCC BAA-1556 / DSM 19958 / E1-9c).